A 600-amino-acid polypeptide reads, in one-letter code: MDIKSKSLEELTDLCDTLRDKILKTVSSNGGHLSSNMGAVELSVAMHYVFDVSKDPFIFDVSHQSYAHKLLTDRWNRFDSLRQFNGISGYTKPSESKFDYFVAGHSSTSISLVVGACKAIKLKGENRLPVAVIGDGAMSAGMAYEALNELGDRKYPCVIILNDNEMSISKPIGALSKYLSQMMAGQFYQKFKARVNQFLSYVPDSAAYMAKRFEEGFRLITPGMFFEELGLEYIGPVDGHDLKELISTFTTAKLMNKPVIVHIQTIKGKGYELAEGPKEKWHGVSPFNLKNGQSVNQANQKSATNIFSELLLNLAKKYENVVGVTAAMPSGTGLNKIIEVFPDRFWDVAIAEQHAVTSMAAMAKEGFKPYIAIYSTFMQRAYDQVIHDCAIMRLPVVFCMDRAGIVGEDGETHQGAFDISFLNAIPNLNLVAPRDEESFKNIMEFSYAFDSPLAIRYPRGNFILNNEYKSQKTALAKGEILENGDGSVAFIGYGNGVGKAVQTAKKLNFKPTIVDLVFAKPLDKELLLQIAKTHNKWYVFSDSAKRGGIGEILAGFLQENLLTNILIKSFEYEDTFIKHGKTSVVEDYLSISAEKISNTF.

Thiamine diphosphate is bound by residues His-63 and 104–106 (GHS). Residue Asp-135 coordinates Mg(2+). Thiamine diphosphate-binding positions include 136–137 (GA), Asn-164, Tyr-271, and Glu-352. Asn-164 contributes to the Mg(2+) binding site.

This sequence belongs to the transketolase family. DXPS subfamily. As to quaternary structure, homodimer. Requires Mg(2+) as cofactor. Thiamine diphosphate is required as a cofactor.

The catalysed reaction is D-glyceraldehyde 3-phosphate + pyruvate + H(+) = 1-deoxy-D-xylulose 5-phosphate + CO2. It participates in metabolic intermediate biosynthesis; 1-deoxy-D-xylulose 5-phosphate biosynthesis; 1-deoxy-D-xylulose 5-phosphate from D-glyceraldehyde 3-phosphate and pyruvate: step 1/1. Functionally, catalyzes the acyloin condensation reaction between C atoms 2 and 3 of pyruvate and glyceraldehyde 3-phosphate to yield 1-deoxy-D-xylulose-5-phosphate (DXP). The protein is 1-deoxy-D-xylulose-5-phosphate synthase of Campylobacter fetus subsp. fetus (strain 82-40).